Reading from the N-terminus, the 303-residue chain is Aspartate carbamoyltransferase catalytic subunit (303 aa).

Carbamoyl phosphate contacts are provided by Arg-54 and Thr-55. Lys-82 lines the L-aspartate pocket. The carbamoyl phosphate site is built by Arg-104, His-132, and Gln-135. Arg-165 and Arg-221 together coordinate L-aspartate. Positions 261 and 262 each coordinate carbamoyl phosphate.

The protein belongs to the aspartate/ornithine carbamoyltransferase superfamily. ATCase family. As to quaternary structure, heterododecamer (2C3:3R2) of six catalytic PyrB chains organized as two trimers (C3), and six regulatory PyrI chains organized as three dimers (R2).

It catalyses the reaction carbamoyl phosphate + L-aspartate = N-carbamoyl-L-aspartate + phosphate + H(+). It functions in the pathway pyrimidine metabolism; UMP biosynthesis via de novo pathway; (S)-dihydroorotate from bicarbonate: step 2/3. Catalyzes the condensation of carbamoyl phosphate and aspartate to form carbamoyl aspartate and inorganic phosphate, the committed step in the de novo pyrimidine nucleotide biosynthesis pathway. This chain is Aspartate carbamoyltransferase catalytic subunit, found in Koribacter versatilis (strain Ellin345).